The following is a 295-amino-acid chain: uncharacterized protein (295 aa).

The signal sequence occupies residues 1–19 (MRKLLLIITVFFTFNVAQA).

This is an uncharacterized protein from Rickettsia conorii (strain ATCC VR-613 / Malish 7).